The chain runs to 392 residues: Chaperone protein DnaJ 2 (392 aa).

The J domain maps to 10-75 (DFYKELGVSS…AKRKEYDETR (66 aa)). A CR-type zinc finger spans residues 161–239 (GVAMPLRLTS…CKGTGVTTRT (79 aa)). Positions 174, 177, 191, 194, 213, 216, 227, and 230 each coordinate Zn(2+). 4 CXXCXGXG motif repeats span residues 174 to 181 (CTNCHGSG), 191 to 198 (CPTCNGSG), 213 to 220 (CTDCRGSG), and 227 to 234 (CDECKGTG).

It belongs to the DnaJ family. Homodimer. The cofactor is Zn(2+).

It localises to the cytoplasm. Functionally, participates actively in the response to hyperosmotic and heat shock by preventing the aggregation of stress-denatured proteins and by disaggregating proteins, also in an autonomous, DnaK-independent fashion. Unfolded proteins bind initially to DnaJ; upon interaction with the DnaJ-bound protein, DnaK hydrolyzes its bound ATP, resulting in the formation of a stable complex. GrpE releases ADP from DnaK; ATP binding to DnaK triggers the release of the substrate protein, thus completing the reaction cycle. Several rounds of ATP-dependent interactions between DnaJ, DnaK and GrpE are required for fully efficient folding. Also involved, together with DnaK and GrpE, in the DNA replication of plasmids through activation of initiation proteins. The sequence is that of Chaperone protein DnaJ 2 from Mycolicibacterium paratuberculosis (strain ATCC BAA-968 / K-10) (Mycobacterium paratuberculosis).